We begin with the raw amino-acid sequence, 443 residues long: 3-ketoacyl-CoA thiolase 1, peroxisomal (443 aa).

The transit peptide at 1-30 directs the protein to the peroxisome; the sequence is MEKATERQRILLRHLQPSSSSDASLSASAC. The active-site Acyl-thioester intermediate is the C130. Residues H385 and C417 each act as proton acceptor in the active site.

Belongs to the thiolase-like superfamily. Thiolase family. As to quaternary structure, homodimer. Low levels in seedlings and leaves.

It localises to the peroxisome. It catalyses the reaction an acyl-CoA + acetyl-CoA = a 3-oxoacyl-CoA + CoA. The protein operates within lipid metabolism; fatty acid metabolism. Functionally, involved in fatty-acid beta-oxidation prior to gluconeogenesis during germination and subsequent seedling growth. Implicated in jasmonic acid (JA) biosynthesis. The protein is 3-ketoacyl-CoA thiolase 1, peroxisomal (KAT1) of Arabidopsis thaliana (Mouse-ear cress).